Reading from the N-terminus, the 270-residue chain is MSGDRRLQGLALKVGPLGEHDRLLTLLSDDVGVVRLAVPGARRPRSSLAAAVPLTCLDLQVVGRRGLARVRQLRVLRSYSGLGQRLDTLASAQALAELAIALVSSDDPVPGLLEAVLIHLDRLERLSRTPGEEADLCLANVVQAGVHLLALGGYGLPLQACCRSGAALTPPIGQWEWRCSVLPEEGLALGALAGARLQLNPSELALLQRLPRPDLPRRSNGELLGPRPVWLKLLALLECWCRAHLPRPVRSLAMVRDCLSAAPLSDHEPT.

This sequence belongs to the RecO family.

In terms of biological role, involved in DNA repair and RecF pathway recombination. This Synechococcus sp. (strain WH7803) protein is DNA repair protein RecO.